We begin with the raw amino-acid sequence, 520 residues long: Laccase-1 (520 aa).

The first 21 residues, 1 to 21 (MSRFHSLLAFVVASLTAVAHA), serve as a signal peptide directing secretion. Plastocyanin-like domains are found at residues 23–148 (IGPV…FVVY) and 160–302 (VDND…ILRY). Residues Asn-72 and Asn-75 are each glycosylated (N-linked (GlcNAc...) asparagine). Residues His-85, His-87, His-130, and His-132 each contribute to the Cu cation site. 2 cysteine pairs are disulfide-bonded: Cys-106–Cys-509 and Cys-138–Cys-226. 4 N-linked (GlcNAc...) asparagine glycosylation sites follow: Asn-229, Asn-238, Asn-354, and Asn-361. The Plastocyanin-like 3 domain occupies 369–491 (TVPVLLQIIS…AGFAVVFAED (123 aa)). Cu cation contacts are provided by His-416, His-419, His-421, His-473, Cys-474, His-475, and His-479.

Belongs to the multicopper oxidase family. Homodimer. The cofactor is Cu cation.

It is found in the secreted. It carries out the reaction 4 hydroquinone + O2 = 4 benzosemiquinone + 2 H2O. Functionally, lignin degradation and detoxification of lignin-derived products. In Trametes villosa (White-rot fungus), this protein is Laccase-1.